Here is a 204-residue protein sequence, read N- to C-terminus: FMN-dependent NADH:quinone oxidoreductase (204 aa).

FMN is bound by residues serine 10 and 15–17 (SLS).

This sequence belongs to the azoreductase type 1 family. In terms of assembly, homodimer. FMN is required as a cofactor.

The catalysed reaction is 2 a quinone + NADH + H(+) = 2 a 1,4-benzosemiquinone + NAD(+). The enzyme catalyses N,N-dimethyl-1,4-phenylenediamine + anthranilate + 2 NAD(+) = 2-(4-dimethylaminophenyl)diazenylbenzoate + 2 NADH + 2 H(+). Its function is as follows. Quinone reductase that provides resistance to thiol-specific stress caused by electrophilic quinones. In terms of biological role, also exhibits azoreductase activity. Catalyzes the reductive cleavage of the azo bond in aromatic azo compounds to the corresponding amines. This chain is FMN-dependent NADH:quinone oxidoreductase, found in Rhizobium johnstonii (strain DSM 114642 / LMG 32736 / 3841) (Rhizobium leguminosarum bv. viciae).